The primary structure comprises 922 residues: Pyruvate dehydrogenase E1 component (922 aa).

As to quaternary structure, homodimer. Part of an unusual ODH/PDH supercomplex, consisting of AceE (E1), AceF (E2), and Lpd (E3) together with OdhA (E1+E2). It depends on Mg(2+) as a cofactor. Thiamine diphosphate serves as cofactor.

It carries out the reaction N(6)-[(R)-lipoyl]-L-lysyl-[protein] + pyruvate + H(+) = N(6)-[(R)-S(8)-acetyldihydrolipoyl]-L-lysyl-[protein] + CO2. In terms of biological role, is a specific component of the pyruvate dehydrogenase (PDH) complex, that catalyzes the overall conversion of pyruvate to acetyl-CoA and CO(2). AceE has reductase activity with pyruvate but does not react with 2-oxoglutarate. The protein is Pyruvate dehydrogenase E1 component (aceE) of Corynebacterium glutamicum (strain ATCC 13032 / DSM 20300 / JCM 1318 / BCRC 11384 / CCUG 27702 / LMG 3730 / NBRC 12168 / NCIMB 10025 / NRRL B-2784 / 534).